The sequence spans 104 residues: Ig lambda-1 chain C region (104 aa).

The region spanning 6–99 (PSVTLFPPSS…EENTVEKSLS (94 aa)) is the Ig-like domain. Cys27 and Cys85 are disulfide-bonded.

This Rattus norvegicus (Rat) protein is Ig lambda-1 chain C region.